The primary structure comprises 234 residues: Urease accessory protein UreF (234 aa).

The protein belongs to the UreF family. In terms of assembly, ureD, UreF and UreG form a complex that acts as a GTP-hydrolysis-dependent molecular chaperone, activating the urease apoprotein by helping to assemble the nickel containing metallocenter of UreC. The UreE protein probably delivers the nickel.

The protein localises to the cytoplasm. Functionally, required for maturation of urease via the functional incorporation of the urease nickel metallocenter. This chain is Urease accessory protein UreF, found in Azoarcus sp. (strain BH72).